Consider the following 288-residue polypeptide: MTSPSVREWRDGGRWLPTAVGKVFVRSGPGDTPTMLLLHGYPSSSFDFRAVIPHLTGQAWVTMDFLGFGLSDKPRPHRYSLLEQAHLVETVVAHTVTGAVVVLAHDMGTSVTTELLARDLDGRLPFDLRRAVLSNGSVILERASLRPIQKVLRSPLGPVAARLVSRGGFTRGFGRIFSPAHPLSAQEAQAQWELLCYNDGNRIPHLLISYLDERIRHAQRWHGAVRDWPKPLGFVWGLDDPVATTNVLNGLRELRPSAAVVELPGLGHYPQVEAPKAYAEAALSLLVD.

This sequence belongs to the AB hydrolase superfamily.

This chain is Putative hydrolase LipZ, found in Mycobacterium tuberculosis (strain CDC 1551 / Oshkosh).